Reading from the N-terminus, the 280-residue chain is MKVVHTIQDLRDHLRGQNRIAFVPTMGNLHEGHLALMKLARQHGDPVVTSIFVNRLQFGPNEDFDRYPRTLQNDIEKMDRDRDVYMVFAPDEREMYPEPQNYRVLPPDDLGDVLEGEFRPGFFQGVCTVVLKLLSCVQPRVAVFGKKDYQQLMIVRAMCRQFQLPVEIIAHETVRASDGLALSSRNRYLSVEERAEAPRLYALLGELRQRVLDGERDVAALEAEAAARLAAHGWRVDYVSLRRQHDLKTPGAADFETRQPLVALAAATLGATRLIDNLEI.

Position 26–33 (26–33 (MGNLHEGH)) interacts with ATP. Histidine 33 acts as the Proton donor in catalysis. Residue glutamine 57 participates in (R)-pantoate binding. Glutamine 57 contacts beta-alanine. Position 145 to 148 (145 to 148 (GKKD)) interacts with ATP. Glutamine 151 contributes to the (R)-pantoate binding site. ATP contacts are provided by residues valine 174 and 182–185 (LSSR).

The protein belongs to the pantothenate synthetase family. Homodimer.

Its subcellular location is the cytoplasm. It carries out the reaction (R)-pantoate + beta-alanine + ATP = (R)-pantothenate + AMP + diphosphate + H(+). The protein operates within cofactor biosynthesis; (R)-pantothenate biosynthesis; (R)-pantothenate from (R)-pantoate and beta-alanine: step 1/1. In terms of biological role, catalyzes the condensation of pantoate with beta-alanine in an ATP-dependent reaction via a pantoyl-adenylate intermediate. This Bordetella avium (strain 197N) protein is Pantothenate synthetase.